A 103-amino-acid chain; its full sequence is MGKLTLLLLALLVWLQYSLWFGKNGIHDYSRVADDVAVQQATNAKLKARNDQLFAEIDDLNGGQEAIEERARNELSMTKPGETFYRLVPDATKRAGGPAQNNR.

The Cytoplasmic segment spans residues 1-3 (MGK). A helical transmembrane segment spans residues 4–21 (LTLLLLALLVWLQYSLWF). At 22 to 103 (GKNGIHDYSR…RAGGPAQNNR (82 aa)) the chain is on the periplasmic side. Residues 38–62 (VQQATNAKLKARNDQLFAEIDDLNG) are a coiled coil.

Belongs to the FtsB family. In terms of assembly, part of a complex composed of FtsB, FtsL and FtsQ.

The protein resides in the cell inner membrane. Essential cell division protein. May link together the upstream cell division proteins, which are predominantly cytoplasmic, with the downstream cell division proteins, which are predominantly periplasmic. This Cronobacter sakazakii (strain ATCC BAA-894) (Enterobacter sakazakii) protein is Cell division protein FtsB.